Reading from the N-terminus, the 135-residue chain is RuBisCO chaperone RbcX (135 aa).

Positions 103 to 135 (QHLERMTQVSLSHPSPESEQQQFSDPDWDNLAS) are disordered. Over residues 109 to 126 (TQVSLSHPSPESEQQQFS) the composition is skewed to polar residues.

It belongs to the RbcX family. As to quaternary structure, homodimer. Interacts with the exposed C-terminal peptide of RbcL ('Glu-459-Asp-468'); binds 1 RbcL peptide per homodimer. Contacts a second RbcL monomer via its peripheral polar surface. A slightly longer RbcL peptide binds to RbcX2 with a higher affinity.

The protein resides in the carboxysome. It localises to the cytoplasm. An RbcL-specific chaperone. The central cleft of the RbcX homodimer (RbcX2) binds the C-terminus of an RbcL monomer, stabilizing the C-terminus and probably preventing its reassociation with chaperonin GroEL-ES. At the same time the peripheral region of RbcX2 binds a second RbcL monomer, bridging the RbcL homodimers in the correct orientation. The RbcX2(2)-bound RbcL dimers then assemble into the RbcL8 core (RbcL8-(RbcX2)8). RbcS binding triggers the release of RbcX2. Its function is as follows. Required for optimal reconstitution of RuBisCO upon expression of rbcL-rbcS subunits in E.coli. The chain is RuBisCO chaperone RbcX from Anabaena sp. (strain CA / ATCC 33047).